We begin with the raw amino-acid sequence, 395 residues long: Biotin biosynthesis cytochrome P450 (395 aa).

Arginine 60 provides a ligand contact to substrate. 89–93 (HRRLR) contacts heme. 169–173 (IDFTR) provides a ligand contact to substrate. Cysteine 250 and cysteine 275 form a disulfide bridge. 285–287 (TAR) contributes to the heme binding site. Tyrosine 307 provides a ligand contact to substrate. Heme-binding positions include 343–345 (HVC) and cysteine 345.

The cofactor is heme.

The enzyme catalyses a C2-C8-saturated long-chain fatty acyl-[ACP] + 2 reduced [flavodoxin] + 3 O2 = 6-carboxyhexanoyl-[ACP] + a fatty aldehyde + 2 oxidized [flavodoxin] + 3 H2O + 3 H(+). The protein operates within cofactor biosynthesis; biotin biosynthesis. In terms of biological role, catalyzes the C-C bond cleavage of fatty acid linked to acyl carrier protein (ACP) to generate pimelic acid for biotin biosynthesis. It has high affinity for long-chain fatty acids with the greatest affinity for myristic acid. This is Biotin biosynthesis cytochrome P450 (bioI) from Bacillus subtilis (strain 168).